The following is a 174-amino-acid chain: Ubiquitin-like protein 4B (174 aa).

Residues 1–76 enclose the Ubiquitin-like domain; it reads MFLTVKLLLG…INVIMQPLEK (76 aa). Basic and acidic residues predominate over residues 141 to 156; sequence EPHVEPAGERELEAKA. The interval 141-174 is disordered; that stretch reads EPHVEPAGERELEAKARPQSSCDMEEKEEAAADQ. A compositionally biased stretch (acidic residues) spans 163-174; it reads DMEEKEEAAADQ.

The protein resides in the cytoplasm. In Homo sapiens (Human), this protein is Ubiquitin-like protein 4B (UBL4B).